Reading from the N-terminus, the 388-residue chain is Processive diacylglycerol beta-glucosyltransferase (388 aa).

Belongs to the glycosyltransferase 28 family. UgtP subfamily.

The protein resides in the cell membrane. The catalysed reaction is a 1,2-diacyl-3-O-(beta-D-glucopyranosyl)-sn-glycerol + UDP-alpha-D-glucose = a 1,2-diacyl-3-O-(beta-D-Glc-(1-&gt;6)-beta-D-Glc)-sn-glycerol + UDP + H(+). It catalyses the reaction a 1,2-diacyl-3-O-(beta-D-Glc-(1-&gt;6)-beta-D-Glc)-sn-glycerol + UDP-alpha-D-glucose = a 1,2-diacyl-3-O-(beta-D-Glc-(1-&gt;6)-beta-D-Glc-(1-&gt;6)-beta-D-Glc)-sn-glycerol + UDP + H(+). The enzyme catalyses a 1,2-diacyl-sn-glycerol + UDP-alpha-D-glucose = a 1,2-diacyl-3-O-(beta-D-glucopyranosyl)-sn-glycerol + UDP + H(+). The protein operates within glycolipid metabolism; diglucosyl-diacylglycerol biosynthesis. Functionally, processive glucosyltransferase involved in the biosynthesis of both the bilayer- and non-bilayer-forming membrane glucolipids. Is able to successively transfer up to three glucosyl residues to diacylglycerol (DAG), thereby catalyzing the formation of beta-monoglucosyl-DAG (3-O-(beta-D-glucopyranosyl)-1,2-diacyl-sn-glycerol), beta-diglucosyl-DAG (3-O-(beta-D-glucopyranosyl-beta-(1-&gt;6)-D-glucopyranosyl)-1,2-diacyl-sn-glycerol) and beta-triglucosyl-DAG (3-O-(beta-D-glucopyranosyl-beta-(1-&gt;6)-D-glucopyranosyl-beta-(1-&gt;6)-D-glucopyranosyl)-1,2-diacyl-sn-glycerol). Beta-diglucosyl-DAG is the predominant glycolipid found in Bacillales and is also used as a membrane anchor for lipoteichoic acid (LTA). This Bacillus anthracis (strain A0248) protein is Processive diacylglycerol beta-glucosyltransferase.